The primary structure comprises 600 residues: Zinc metalloproteinase-disintegrin-like stejnihagin-B (600 aa).

The signal sequence occupies residues 1–20; sequence MIEVLLVTICLAVFPYQGSS. A propeptide spanning residues 21-191 is cleaved from the precursor; the sequence is IILESGNVND…KASQLVVTAE (171 aa). Residue glutamine 192 is modified to Pyrrolidone carboxylic acid. A Peptidase M12B domain is found at 198–389; the sequence is RYVKLAIVAD…YNPQCILNAL (192 aa). Residues asparagine 261 and asparagine 317 are each glycosylated (N-linked (GlcNAc...) asparagine). Intrachain disulfides connect cysteine 306–cysteine 384, cysteine 346–cysteine 368, and cysteine 348–cysteine 351. Zn(2+) is bound at residue histidine 331. Residue glutamate 332 is part of the active site. Residues histidine 335 and histidine 341 each contribute to the Zn(2+) site. The 87-residue stretch at 397 to 483 folds into the Disintegrin domain; sequence PPVCGNELLE…DCPTDSFHRN (87 aa). Positions 399, 402, 404, 406, 409, and 412 each coordinate Ca(2+). 14 disulfide bridges follow: cysteine 400–cysteine 429, cysteine 411–cysteine 424, cysteine 413–cysteine 419, cysteine 423–cysteine 446, cysteine 437–cysteine 443, cysteine 442–cysteine 468, cysteine 455–cysteine 475, cysteine 462–cysteine 494, cysteine 487–cysteine 499, cysteine 506–cysteine 556, cysteine 521–cysteine 565, cysteine 534–cysteine 544, cysteine 551–cysteine 587, and cysteine 581–cysteine 593. Asparagine 425 is a glycosylation site (N-linked (GlcNAc...) asparagine). The short motif at 461–463 is the D/ECD-tripeptide element; sequence ECD. Residue asparagine 467 is glycosylated (N-linked (GlcNAc...) asparagine). N-linked (GlcNAc...) asparagine glycosylation occurs at asparagine 513.

It belongs to the venom metalloproteinase (M12B) family. P-III subfamily. P-IIIa sub-subfamily. In terms of assembly, monomer. It depends on Zn(2+) as a cofactor. As to expression, expressed by the venom gland.

It is found in the secreted. Its function is as follows. This metalloproteinase-disintegrin-like impairs hemostasis in the envenomed animal. This is Zinc metalloproteinase-disintegrin-like stejnihagin-B from Trimeresurus stejnegeri (Chinese green tree viper).